We begin with the raw amino-acid sequence, 89 residues long: Small ribosomal subunit protein uS15 (89 aa).

Belongs to the universal ribosomal protein uS15 family. Part of the 30S ribosomal subunit. Forms a bridge to the 50S subunit in the 70S ribosome, contacting the 23S rRNA.

In terms of biological role, one of the primary rRNA binding proteins, it binds directly to 16S rRNA where it helps nucleate assembly of the platform of the 30S subunit by binding and bridging several RNA helices of the 16S rRNA. Forms an intersubunit bridge (bridge B4) with the 23S rRNA of the 50S subunit in the ribosome. The protein is Small ribosomal subunit protein uS15 of Exiguobacterium sibiricum (strain DSM 17290 / CCUG 55495 / CIP 109462 / JCM 13490 / 255-15).